Reading from the N-terminus, the 552-residue chain is Capsid protein precursor (552 aa).

A disordered region spans residues 1–41; that stretch reads MKQNDTKKTTQRRNSKKYSSKTNRGTKRAPRDQEVGTGAQE. Over residues 9-28 the composition is skewed to basic residues; that stretch reads TTQRRNSKKYSSKTNRGTKR.

As to quaternary structure, homodimer. Post-translationally, the 7 kDa polypeptide is acetylated. In terms of processing, autocatalytic proteolysis releases a post-translationally modified peptide that remains associated with nucleic acid within the virion. This peptide is observed only when nucleic acid is packaged in the capsid.

It is found in the virion. In terms of biological role, the capsid protein self-assembles to form an icosahedral capsid with a T=2 symmetry made of 120 subunits. This is Capsid protein precursor (Segment-1) from Human picobirnavirus (strain Human/Thailand/Hy005102/-) (PBV).